A 500-amino-acid polypeptide reads, in one-letter code: Glucose-1-phosphate adenylyltransferase large subunit, chloroplastic/amyloplastic (500 aa).

Residues 1–33 (RASPPSESRAPLRAPQRSATRQHQARQGPRRMC) constitute a chloroplast transit peptide. The segment at 1-47 (RASPPSESRAPLRAPQRSATRQHQARQGPRRMCNGGRGPPYWTAGVT) is disordered.

Belongs to the bacterial/plant glucose-1-phosphate adenylyltransferase family. As to quaternary structure, heterotetramer.

Its subcellular location is the plastid. The protein resides in the chloroplast. It localises to the amyloplast. The enzyme catalyses alpha-D-glucose 1-phosphate + ATP + H(+) = ADP-alpha-D-glucose + diphosphate. It participates in glycan biosynthesis; starch biosynthesis. Its activity is regulated as follows. Insensitive to 3'phosphoglycerate and orthophosphate. This protein plays a role in synthesis of starch. It catalyzes the synthesis of the activated glycosyl donor, ADP-glucose from Glc-1-P and ATP. In Triticum aestivum (Wheat), this protein is Glucose-1-phosphate adenylyltransferase large subunit, chloroplastic/amyloplastic (AGA.7).